The sequence spans 84 residues: Large ribosomal subunit protein bL27 (84 aa).

The protein belongs to the bacterial ribosomal protein bL27 family.

The chain is Large ribosomal subunit protein bL27 from Campylobacter lari (strain RM2100 / D67 / ATCC BAA-1060).